Here is a 155-residue protein sequence, read N- to C-terminus: Ribosomal RNA large subunit methyltransferase H (155 aa).

S-adenosyl-L-methionine-binding positions include leucine 72, glycine 103, and 122–127 (LSDLTL).

This sequence belongs to the RNA methyltransferase RlmH family. Homodimer.

The protein localises to the cytoplasm. It catalyses the reaction pseudouridine(1915) in 23S rRNA + S-adenosyl-L-methionine = N(3)-methylpseudouridine(1915) in 23S rRNA + S-adenosyl-L-homocysteine + H(+). In terms of biological role, specifically methylates the pseudouridine at position 1915 (m3Psi1915) in 23S rRNA. This chain is Ribosomal RNA large subunit methyltransferase H, found in Verminephrobacter eiseniae (strain EF01-2).